The following is a 483-amino-acid chain: ATP-dependent protease ATPase subunit HslU (483 aa).

Residues V18 and 60-65 (GVGKTE) contribute to the ATP site. Composition is skewed to low complexity over residues 136–147 (LPGGAPQPAPAQ) and 171–181 (AQADASQASPP). The disordered stretch occupies residues 136–212 (LPGGAPQPAP…HGGKLDDREV (77 aa)). Residues 182–191 (TGTGSAPDSR) show a composition bias toward polar residues. A compositionally biased stretch (basic and acidic residues) spans 192-209 (SSTREKLRTLWHGGKLDD). 3 residues coordinate ATP: D296, E361, and R433.

It belongs to the ClpX chaperone family. HslU subfamily. A double ring-shaped homohexamer of HslV is capped on each side by a ring-shaped HslU homohexamer. The assembly of the HslU/HslV complex is dependent on binding of ATP.

It localises to the cytoplasm. Functionally, ATPase subunit of a proteasome-like degradation complex; this subunit has chaperone activity. The binding of ATP and its subsequent hydrolysis by HslU are essential for unfolding of protein substrates subsequently hydrolyzed by HslV. HslU recognizes the N-terminal part of its protein substrates and unfolds these before they are guided to HslV for hydrolysis. The sequence is that of ATP-dependent protease ATPase subunit HslU from Nitratidesulfovibrio vulgaris (strain DSM 19637 / Miyazaki F) (Desulfovibrio vulgaris).